A 336-amino-acid polypeptide reads, in one-letter code: Cytoskeleton protein RodZ (336 aa).

Topologically, residues 1 to 111 (MNTEATHDQN…LGKRRKKRDG (111 aa)) are cytoplasmic. An HTH cro/C1-type domain is found at 19 to 71 (LRNAREQLGLSQQAVAERLCLKVSTVRDIEEDKAPADLASTFLRGYIRSYARL). A DNA-binding region (H-T-H motif) is located at residues 30-49 (QQAVAERLCLKVSTVRDIEE). Residues 112–132 (WLMTFTWLVLFVVIGLSGAWW) traverse the membrane as a helical; Signal-anchor for type II membrane protein segment. Over 133–336 (WQDHKAQQEE…TLNAEQSPAQ (204 aa)) the chain is Periplasmic. Residues 148–164 (DQSSAELNNNQSQSVPL) show a composition bias toward polar residues. The disordered stretch occupies residues 148-248 (DQSSAELNNN…TDQAGVTTPA (101 aa)). The span at 165–201 (DTSTTTDQAMATTPTSPVDTTATNTQTPAATTAPSPT) shows a compositional bias: low complexity. Residues 202-217 (VDSQQNAVVPPSQANV) are compositionally biased toward polar residues. The segment covering 219-236 (TAATPAPAATTMPDGAAP) has biased composition (low complexity).

This sequence belongs to the RodZ family.

The protein resides in the cell inner membrane. Its function is as follows. Cytoskeletal protein that is involved in cell-shape control through regulation of the length of the long axis. The sequence is that of Cytoskeleton protein RodZ from Escherichia coli (strain SMS-3-5 / SECEC).